A 601-amino-acid polypeptide reads, in one-letter code: DNA mismatch repair protein MutL (601 aa).

It belongs to the DNA mismatch repair MutL/HexB family.

This protein is involved in the repair of mismatches in DNA. It is required for dam-dependent methyl-directed DNA mismatch repair. May act as a 'molecular matchmaker', a protein that promotes the formation of a stable complex between two or more DNA-binding proteins in an ATP-dependent manner without itself being part of a final effector complex. The polypeptide is DNA mismatch repair protein MutL (Listeria monocytogenes serovar 1/2a (strain ATCC BAA-679 / EGD-e)).